We begin with the raw amino-acid sequence, 261 residues long: Dienlactone hydrolase 1 (261 aa).

Residues C147, D194, and H226 contribute to the active site.

The protein belongs to the dienelactone hydrolase family.

It participates in xenobiotic degradation. Functionally, dienlactone hydrolase; part of the Fusarium detoxification of benzoxazolinone cluster 1 (FDB1) involved in the degradation of benzoxazolinones produced by the host plant. Maize, wheat, and rye produce the 2 benzoxazinone phytoanticipins 2,4-dihy-droxy-7-methoxy-1,4-benzoxazin-3-one (DIMBOA) and 2,4-dihydroxy-1,4-benzoxazin-3-one (DIBOA) that, due to their inherent instability once released, spontaneously degrade to the more stable corresponding benzoxazolinones, 6-methoxy-2-benzoxazolinone (MBOA) and 2-benzoxazolinone (BOA), respectively. The first step in the detoxification of benzoxazolinones involves the hydrolysis of the cyclic ester bond of benzoxazolinones by the FDB1 cluster gamma-lactamase MBL1 to aminophenols. MBL1 is able to convert BOA into 2-aminophenol (2-AP), as well as MBOA into 5-methoxy-2-aminophenol (2-AMP). The FDB2 cluster N-malonyltransferase FDB2/NAT1 then metabolizes aminophenols via N-malonylation to non-toxic malonamic acids. FDB2/NAT1 converts 2-AP into N-(2-hydroxyphenyl) malonamic acid (HPMA) and 2-AMP into N-(2-hydroxy-4-methoxyphenyl) malonamic acid (HMPMA). The duplicated dienlactone hydrolases DLH1 and DLH2 may provide redundant function for hydrolyzing the lactone moiety in the BOA molecule. The roles of the amidases and other enzymes encoded by the 2 FDB clusters have not been identified so far. The polypeptide is Dienlactone hydrolase 1 (Gibberella moniliformis (strain M3125 / FGSC 7600) (Maize ear and stalk rot fungus)).